The chain runs to 309 residues: RHOMBOID-like protein 5 (309 aa).

Helical transmembrane passes span 27-47 (IPVP…FVTF), 113-133 (IWLH…MCIG), 140-160 (FGFM…SLVS), 170-190 (VSVG…SELI), 200-220 (CTAL…GFLP), 222-242 (VDNS…FVLL), and 274-294 (IFRF…YTKL). The Nucleophile role is filled by Ser175. Residue His227 is the Charge relay system of the active site.

Belongs to the peptidase S54 family.

It localises to the membrane. It carries out the reaction Cleaves type-1 transmembrane domains using a catalytic dyad composed of serine and histidine that are contributed by different transmembrane domains.. Probable rhomboid-type serine protease that catalyzes intramembrane proteolysis. May function in reproductive organs maturation. This is RHOMBOID-like protein 5 from Arabidopsis thaliana (Mouse-ear cress).